Consider the following 954-residue polypeptide: Glycine dehydrogenase (decarboxylating) (954 aa).

Lysine 706 bears the N6-(pyridoxal phosphate)lysine mark.

It belongs to the GcvP family. In terms of assembly, the glycine cleavage system is composed of four proteins: P, T, L and H. Pyridoxal 5'-phosphate is required as a cofactor.

The catalysed reaction is N(6)-[(R)-lipoyl]-L-lysyl-[glycine-cleavage complex H protein] + glycine + H(+) = N(6)-[(R)-S(8)-aminomethyldihydrolipoyl]-L-lysyl-[glycine-cleavage complex H protein] + CO2. Functionally, the glycine cleavage system catalyzes the degradation of glycine. The P protein binds the alpha-amino group of glycine through its pyridoxal phosphate cofactor; CO(2) is released and the remaining methylamine moiety is then transferred to the lipoamide cofactor of the H protein. The chain is Glycine dehydrogenase (decarboxylating) from Thermosynechococcus vestitus (strain NIES-2133 / IAM M-273 / BP-1).